The chain runs to 85 residues: Small ribosomal subunit protein uS17 (85 aa).

This sequence belongs to the universal ribosomal protein uS17 family. In terms of assembly, part of the 30S ribosomal subunit.

Functionally, one of the primary rRNA binding proteins, it binds specifically to the 5'-end of 16S ribosomal RNA. The chain is Small ribosomal subunit protein uS17 from Geobacter sp. (strain M21).